The primary structure comprises 841 residues: Nuclear RNA export factor 2 (841 aa).

The segment at 1–285 (MPNQMRVLDF…NFELVDGKPF (285 aa)) is RNA-binding unit probably involved in Piwi-dependent recruitment and single-stranded RNA-PPNP complex formation. 3 LRR repeats span residues 200 to 221 (RLNG…TLLA), 224 to 245 (DYAL…CRAL), and 249 to 270 (RARE…PANI). Residues 286 to 553 (NMLHKIFSPL…EYVRAVKEVF (268 aa)) are necessary for silencing function. One can recognise an RRM domain in the interval 325-408 (WHAFMIPDPS…IFRYYLRMNV (84 aa)). LRR repeat units lie at residues 475–496 (TCSE…HVLG), 500–521 (CLRA…HSLG), and 524–545 (PLKS…PSEY). The NTF2 domain maps to 585 to 758 (LVGAFLENYL…LKIANERLHI (174 aa)). One can recognise a TAP-C domain in the interval 788–841 (DVKDHKLLLFQEVTGLISTWVTSIVEEADWDFERALKLFIQKNADHEIPDLAFA).

The protein belongs to the NXF family. In the ovaries, part of a complex composed of at least Panx, nxf2, piwi and Nxt1. The complex is knowns as Panx-induced cotranscriptional silencing (PICTS) complex, Panx-nxf2-dependent TAP/p15 silencing (Pandas complex), SFiNX (silencing factor interacting nuclear export variant) or piwi-Panx-nxf2-p15 (PPNP) complex. Interacts (via TAP-C domain) with Panx (via NIR region); the interaction is direct. Interacts (via NTF2 domain) with Nxt1; the interaction is direct and prevents Nxt1 binding to nucleoporins. Interacts with sbr/Nxf1. As to expression, expressed in female gonads (at protein level). Expressed ubiquitously.

The protein resides in the cytoplasm. It is found in the nucleus. It localises to the nucleoplasm. May be involved in the export of mRNA from the nucleus to the cytoplasm. In the ovaries, forms a complex with nxf2, piwi and Nxt1 which acts as effectors of cotranscriptional transposon silencing. On recruitment to a target transcript, interacts with single stranded RNA, thereby anchoring the complex via the nascent target transcript to chromatin and allowing Panx to recruit silencing effectors to establishing repressive heterochromatin at transposon loci. Does not affect piRNA biogenesis. The interaction with Panx stabilizes the nuclear protein complex. Does not bind nucleoporins, but regulates sbr/Nxf1 binding to nucleoporins and, indirectly, transposon exports. The sequence is that of Nuclear RNA export factor 2 (nxf2) from Drosophila melanogaster (Fruit fly).